The chain runs to 80 residues: Small ribosomal subunit protein bS16 (80 aa).

Belongs to the bacterial ribosomal protein bS16 family.

This Laribacter hongkongensis (strain HLHK9) protein is Small ribosomal subunit protein bS16.